We begin with the raw amino-acid sequence, 27 residues long: Augerpeptide hhe6.2 (27 aa).

3 disulfides stabilise this stretch: Cys-4–Cys-13, Cys-8–Cys-20, and Cys-12–Cys-27.

In terms of tissue distribution, expressed by the venom duct.

It is found in the secreted. In Hastula hectica (Sea snail), this protein is Augerpeptide hhe6.2.